The chain runs to 613 residues: UvrABC system protein C (613 aa).

The 78-residue stretch at 12-89 (DHPGVYIMHD…IKQHRPRYNV (78 aa)) folds into the GIY-YIG domain. Positions 199-234 (TALVKELKEQMEAAAARLEFEKAARLRDQLRAVQEV) constitute a UVR domain.

It belongs to the UvrC family. Interacts with UvrB in an incision complex.

The protein localises to the cytoplasm. Its function is as follows. The UvrABC repair system catalyzes the recognition and processing of DNA lesions. UvrC both incises the 5' and 3' sides of the lesion. The N-terminal half is responsible for the 3' incision and the C-terminal half is responsible for the 5' incision. This is UvrABC system protein C from Moorella thermoacetica (strain ATCC 39073 / JCM 9320).